A 135-amino-acid chain; its full sequence is Large ribosomal subunit protein uL16m (135 aa).

This sequence belongs to the universal ribosomal protein uL16 family.

It is found in the mitochondrion. The chain is Large ribosomal subunit protein uL16m (RPL16) from Prototheca wickerhamii.